The sequence spans 200 residues: Small ribosomal subunit protein uS4 (200 aa).

A disordered region spans residues 22–43 (TGKELERRPYAPGQHGPTQRKK). The region spanning 92–170 (QRLDNIVYRL…VPEYVTFDAE (79 aa)) is the S4 RNA-binding domain.

The protein belongs to the universal ribosomal protein uS4 family. As to quaternary structure, part of the 30S ribosomal subunit. Contacts protein S5. The interaction surface between S4 and S5 is involved in control of translational fidelity.

Its function is as follows. One of the primary rRNA binding proteins, it binds directly to 16S rRNA where it nucleates assembly of the body of the 30S subunit. In terms of biological role, with S5 and S12 plays an important role in translational accuracy. The chain is Small ribosomal subunit protein uS4 from Listeria monocytogenes serotype 4b (strain F2365).